A 518-amino-acid chain; its full sequence is Protein nucleotidyltransferase YdiU (518 aa).

The interval Met-1–Pro-22 is disordered. ATP contacts are provided by Gly-100, Gly-102, Arg-103, Lys-123, Asp-135, Gly-136, Arg-193, and Arg-200. Asp-270 (proton acceptor) is an active-site residue. Asn-271 and Asp-280 together coordinate Mg(2+). An ATP-binding site is contributed by Asp-280.

The protein belongs to the SELO family. Mg(2+) is required as a cofactor. It depends on Mn(2+) as a cofactor.

The enzyme catalyses L-seryl-[protein] + ATP = 3-O-(5'-adenylyl)-L-seryl-[protein] + diphosphate. It catalyses the reaction L-threonyl-[protein] + ATP = 3-O-(5'-adenylyl)-L-threonyl-[protein] + diphosphate. It carries out the reaction L-tyrosyl-[protein] + ATP = O-(5'-adenylyl)-L-tyrosyl-[protein] + diphosphate. The catalysed reaction is L-histidyl-[protein] + UTP = N(tele)-(5'-uridylyl)-L-histidyl-[protein] + diphosphate. The enzyme catalyses L-seryl-[protein] + UTP = O-(5'-uridylyl)-L-seryl-[protein] + diphosphate. It catalyses the reaction L-tyrosyl-[protein] + UTP = O-(5'-uridylyl)-L-tyrosyl-[protein] + diphosphate. Nucleotidyltransferase involved in the post-translational modification of proteins. It can catalyze the addition of adenosine monophosphate (AMP) or uridine monophosphate (UMP) to a protein, resulting in modifications known as AMPylation and UMPylation. This Xanthomonas campestris pv. campestris (strain 8004) protein is Protein nucleotidyltransferase YdiU.